We begin with the raw amino-acid sequence, 211 residues long: Outer-membrane lipoprotein carrier protein (211 aa).

The first 24 residues, 1-24 (MNTIKILIGLLGIFLFSLSGIVSA), serve as a signal peptide directing secretion.

It belongs to the LolA family. In terms of assembly, monomer.

Its subcellular location is the periplasm. Its function is as follows. Participates in the translocation of lipoproteins from the inner membrane to the outer membrane. Only forms a complex with a lipoprotein if the residue after the N-terminal Cys is not an aspartate (The Asp acts as a targeting signal to indicate that the lipoprotein should stay in the inner membrane). The polypeptide is Outer-membrane lipoprotein carrier protein (Coxiella burnetii (strain CbuK_Q154) (Coxiella burnetii (strain Q154))).